We begin with the raw amino-acid sequence, 902 residues long: Glutamate receptor 4 (902 aa).

The first 20 residues, 1 to 20 (MRIICRQIVLLFSGFWGLAM), serve as a signal peptide directing secretion. The Extracellular portion of the chain corresponds to 22–544 (AFPSSVQIGG…GVFSFLDPLA (523 aa)). Asn52, Asn56, Asn258, Asn371, Asn407, and Asn414 each carry an N-linked (GlcNAc...) asparagine glycan. An intrachain disulfide couples Cys84 to Cys331. L-glutamate contacts are provided by Pro500, Thr502, and Arg507. The helical transmembrane segment at 545 to 565 (YEIWMCIVFAYIGVSVVLFLV) threads the bilayer. Over 566-592 (SRFSPYEWHTEEPEDGKEGPSDQPPNE) the chain is Cytoplasmic. Positions 593–608 (FGIFNSLWFSLGAFMQ) form an intramembrane region, helical; Pore-forming. The stretch at 609–611 (QGC) is an intramembrane region. Residue Cys611 is the site of S-palmitoyl cysteine attachment. The Cytoplasmic portion of the chain corresponds to 612-617 (DISPRS). The chain crosses the membrane as a helical span at residues 618 to 638 (LSGRIVGGVWWFFTLIIISSY). At 639 to 813 (TANLAAFLTV…DKTSALSLSN (175 aa)) the chain is on the extracellular side. Ser676, Thr677, and Glu727 together coordinate L-glutamate. Cysteines 740 and 795 form a disulfide. A helical transmembrane segment spans residues 814 to 834 (VAGVFYILVGGLGLAMLVALI). Topologically, residues 835 to 902 (EFCYKSRAEA…GLAVIASDLP (68 aa)) are cytoplasmic. A lipid anchor (S-palmitoyl cysteine) is attached at Cys837. Ser862 bears the Phosphoserine mark.

The protein belongs to the glutamate-gated ion channel (TC 1.A.10.1) family. GRIA4 subfamily. In terms of assembly, homotetramer or heterotetramer of pore-forming glutamate receptor subunits. Tetramers may be formed by the dimerization of dimers. Interacts with EPB41L1 via its C-terminus. Isoform 3 interacts with PICK1. Found in a complex with GRIA1, GRIA2, GRIA3, CNIH2, CNIH3, CACNG2, CACNG3, CACNG4, CACNG5, CACNG7 and CACNG8. Interacts with CACNG5 and PRKCG. Found in a complex with GRIA1, GRIA2, GRIA3, DLG4, CACNG8 and CNIH2. In terms of processing, palmitoylated. Depalmitoylated upon L-glutamate stimulation. ZDHHC3/GODZ specifically palmitoylates Cys-611, which leads to Golgi retention and decreased cell surface expression. In contrast, Cys-837 palmitoylation does not affect cell surface expression but regulates stimulation-dependent endocytosis. Post-translationally, phosphorylated at Ser-862 by PRKCG; phosphorylation increases plasma membrane-associated GRI4 expression.

Its subcellular location is the cell membrane. The protein localises to the postsynaptic cell membrane. The protein resides in the cell projection. It localises to the dendrite. The enzyme catalyses Ca(2+)(in) = Ca(2+)(out). The catalysed reaction is Na(+)(in) = Na(+)(out). It catalyses the reaction Mg(2+)(in) = Mg(2+)(out). Ionotropic glutamate receptor that functions as a ligand-gated cation channel, gated by L-glutamate and glutamatergic agonists such as alpha-amino-3-hydroxy-5-methyl-4-isoxazolepropionic acid (AMPA), quisqualic acid, and kainic acid. L-glutamate acts as an excitatory neurotransmitter at many synapses in the central nervous system and plays an important role in fast excitatory synaptic transmission. Binding of the excitatory neurotransmitter L-glutamate induces a conformation change, leading to the opening of the cation channel, and thereby converts the chemical signal to an electrical impulse upon entry of monovalent and divalent cations such as sodium and calcium. The receptor then desensitizes rapidly and enters a transient inactive state, characterized by the presence of bound agonist. In the presence of CACNG8, shows resensitization which is characterized by a delayed accumulation of current flux upon continued application of L-glutamate. The chain is Glutamate receptor 4 from Mus musculus (Mouse).